Consider the following 78-residue polypeptide: Conotoxin ArMKLT2-0312 (78 aa).

A signal peptide spans 1–22 (MKLTCVLIIAVLFLTACQLITA). The propeptide occupies 23–45 (DYSRDKQEYRAVRLRDAMRYSRV). A Pyrrolidone carboxylic acid modification is found at Q48. Disulfide bonds link C49-C62, C56-C67, and C61-C75.

The protein belongs to the conotoxin O1 superfamily. In terms of tissue distribution, expressed by the venom duct.

Its subcellular location is the secreted. The chain is Conotoxin ArMKLT2-0312 from Conus arenatus (Sand-dusted cone).